Consider the following 437-residue polypeptide: Enolase 2 (437 aa).

Q162 serves as a coordination point for (2R)-2-phosphoglycerate. Residue E204 is the Proton donor of the active site. 3 residues coordinate Mg(2+): D251, E297, and D324. Residues K349, R378, S379, and K400 each coordinate (2R)-2-phosphoglycerate. K349 serves as the catalytic Proton acceptor.

It belongs to the enolase family. Mg(2+) serves as cofactor.

The protein localises to the cytoplasm. Its subcellular location is the secreted. It localises to the cell surface. It catalyses the reaction (2R)-2-phosphoglycerate = phosphoenolpyruvate + H2O. Its pathway is carbohydrate degradation; glycolysis; pyruvate from D-glyceraldehyde 3-phosphate: step 4/5. Functionally, catalyzes the reversible conversion of 2-phosphoglycerate (2-PG) into phosphoenolpyruvate (PEP). It is essential for the degradation of carbohydrates via glycolysis. The sequence is that of Enolase 2 from Chlorobaculum tepidum (strain ATCC 49652 / DSM 12025 / NBRC 103806 / TLS) (Chlorobium tepidum).